Reading from the N-terminus, the 246-residue chain is Auxin-responsive protein IAA25 (246 aa).

Residues 1–22 (MKSSSVAPRLKQERQDDCKFQE) form a disordered region. Residues 10 to 22 (LKQERQDDCKFQE) show a composition bias toward basic and acidic residues. The EAR-like (transcriptional repression) motif lies at 28 to 32 (LELRL). The region spanning 143–238 (TMFVKVNLEG…SVKRLYIAQD (96 aa)) is the PB1 domain.

Belongs to the Aux/IAA family. In terms of assembly, homodimers and heterodimers. Highly expressed in flowers. Expressed in roots and seedlings.

It localises to the nucleus. Aux/IAA proteins are short-lived transcriptional factors that function as repressors of early auxin response genes at low auxin concentrations. The protein is Auxin-responsive protein IAA25 (IAA25) of Oryza sativa subsp. japonica (Rice).